The primary structure comprises 139 residues: MTALVLWGLLLLLGQHTQVNSHVLGRPFSASDSSQLKSLLERLEETISEADQEQNPELDQEVEYDIRDQDPGQRWNLDLGRDQDQVTATRSEIHSRPSVQRSHLQDLLMSLRKRASSCFGARMDRIGNASGLGCNNGRG.

An N-terminal signal peptide occupies residues 1–21 (MTALVLWGLLLLLGQHTQVNS). Positions 22–114 (HVLGRPFSAS…QDLLMSLRKR (93 aa)) are excised as a propeptide. Cys118 and Cys134 form a disulfide bridge.

The protein belongs to the natriuretic peptide family.

It is found in the secreted. Functionally, hormone playing a key role in cardiovascular homeostasis through regulation of natriuresis, diuresis, and vasodilation. Has a cGMP-stimulating activity. The polypeptide is Natriuretic peptides A (nppa) (Takifugu rubripes (Japanese pufferfish)).